The primary structure comprises 70 residues: Putative membrane protein insertion efficiency factor (70 aa).

This sequence belongs to the UPF0161 family.

The protein localises to the cell membrane. In terms of biological role, could be involved in insertion of integral membrane proteins into the membrane. In Moorella thermoacetica (strain ATCC 39073 / JCM 9320), this protein is Putative membrane protein insertion efficiency factor.